We begin with the raw amino-acid sequence, 463 residues long: tRNA modification GTPase MnmE (463 aa).

Residues arginine 30, glutamate 92, and arginine 132 each contribute to the (6S)-5-formyl-5,6,7,8-tetrahydrofolate site. In terms of domain architecture, TrmE-type G spans 227–386 (GLRVALVGRP…LVQAVLERCG (160 aa)). Asparagine 237 contributes to the K(+) binding site. Residues 237–242 (NVGKSS), 256–262 (TDLPGTT), 281–284 (DTAG), and 342–345 (NKAD) contribute to the GTP site. Position 241 (serine 241) interacts with Mg(2+). K(+)-binding residues include threonine 256, leucine 258, and threonine 261. Position 262 (threonine 262) interacts with Mg(2+). (6S)-5-formyl-5,6,7,8-tetrahydrofolate is bound at residue lysine 463.

The protein belongs to the TRAFAC class TrmE-Era-EngA-EngB-Septin-like GTPase superfamily. TrmE GTPase family. Homodimer. Heterotetramer of two MnmE and two MnmG subunits. K(+) serves as cofactor.

It is found in the cytoplasm. Exhibits a very high intrinsic GTPase hydrolysis rate. Involved in the addition of a carboxymethylaminomethyl (cmnm) group at the wobble position (U34) of certain tRNAs, forming tRNA-cmnm(5)s(2)U34. The polypeptide is tRNA modification GTPase MnmE (Synechococcus sp. (strain CC9311)).